The chain runs to 120 residues: NAD(P)H-quinone oxidoreductase subunit 3, chloroplastic (120 aa).

3 consecutive transmembrane segments (helical) span residues 9 to 29 (IFWA…LLSG), 64 to 84 (MFAL…PWAM), and 88 to 108 (VLGV…IVGL).

The protein belongs to the complex I subunit 3 family. In terms of assembly, NDH is composed of at least 16 different subunits, 5 of which are encoded in the nucleus.

It is found in the plastid. Its subcellular location is the chloroplast thylakoid membrane. It catalyses the reaction a plastoquinone + NADH + (n+1) H(+)(in) = a plastoquinol + NAD(+) + n H(+)(out). It carries out the reaction a plastoquinone + NADPH + (n+1) H(+)(in) = a plastoquinol + NADP(+) + n H(+)(out). Its function is as follows. NDH shuttles electrons from NAD(P)H:plastoquinone, via FMN and iron-sulfur (Fe-S) centers, to quinones in the photosynthetic chain and possibly in a chloroplast respiratory chain. The immediate electron acceptor for the enzyme in this species is believed to be plastoquinone. Couples the redox reaction to proton translocation, and thus conserves the redox energy in a proton gradient. This chain is NAD(P)H-quinone oxidoreductase subunit 3, chloroplastic, found in Fagopyrum esculentum subsp. ancestrale (Wild buckwheat).